A 149-amino-acid polypeptide reads, in one-letter code: uncharacterized protein (149 aa).

A helical transmembrane segment spans residues 12-31 (FKNLVIGAVSGVAAAYFLST).

It is found in the membrane. This is an uncharacterized protein from Streptococcus pyogenes serotype M6 (strain ATCC BAA-946 / MGAS10394).